The sequence spans 291 residues: Undecaprenyl-diphosphatase (291 aa).

Transmembrane regions (helical) follow at residues Met-1–Phe-21, Ser-48–Phe-68, Leu-102–Ile-122, Leu-126–Ala-146, Ile-162–Phe-182, Ser-203–Leu-223, Ile-231–Ala-251, and Phe-267–Ile-287.

The protein belongs to the UppP family.

The protein resides in the cell membrane. It carries out the reaction di-trans,octa-cis-undecaprenyl diphosphate + H2O = di-trans,octa-cis-undecaprenyl phosphate + phosphate + H(+). Functionally, catalyzes the dephosphorylation of undecaprenyl diphosphate (UPP). Confers resistance to bacitracin. This Staphylococcus aureus (strain Mu3 / ATCC 700698) protein is Undecaprenyl-diphosphatase.